The sequence spans 86 residues: Small ribosomal subunit protein uS17 (86 aa).

This sequence belongs to the universal ribosomal protein uS17 family. Part of the 30S ribosomal subunit.

In terms of biological role, one of the primary rRNA binding proteins, it binds specifically to the 5'-end of 16S ribosomal RNA. The protein is Small ribosomal subunit protein uS17 of Helicobacter pylori (strain P12).